Reading from the N-terminus, the 510-residue chain is MDIRAAEISAILKDQIKNFGQEAEVSEVGQVLSVGDGIARVYGLDNVLAGEMVEFENGTRGMALNLETDNVGVVIFGADREIKEGQTVKRTRSIVDAPVGKGLLGRVVDALGNPIDGKGPIQAVERKRVDVKAPGIIPRKSVHEPMATGLKSIDALIPIGRGQRELIIGDRQTGKTAIALDTILNQKPLNVEGAPESQKLYCVYVAVGQKRSTVAQFVKVLEEQGALEYSVVVAATASDPAPMQYIAPFTGCTIGEYFRDNGMHAVIIYDDLSKQAVAYRQMSLLLRRPPGREAYPGDVFYLHSRLLERAAKLNDEQGNGSLTALPVIETQANDVSAYIPTNVISITDGQIFLETDLFFQGIRPAVNVGLSVSRVGSSAQTKAMKKVAGKIKGELAQYREMAAFAQFGSDLDAATQRLLNRGSRLTELLKQPQFSPLKMEEQVCVIWAGTNGYLDALPLNKVRAFEDGLLALLRGKESGILEAIRTSRDLSDDTAAKLKAVVESYAKTFA.

169–176 (GDRQTGKT) contributes to the ATP binding site.

The protein belongs to the ATPase alpha/beta chains family. As to quaternary structure, F-type ATPases have 2 components, CF(1) - the catalytic core - and CF(0) - the membrane proton channel. CF(1) has five subunits: alpha(3), beta(3), gamma(1), delta(1), epsilon(1). CF(0) has four main subunits: a(1), b(1), b'(1) and c(9-12).

Its subcellular location is the cell inner membrane. It catalyses the reaction ATP + H2O + 4 H(+)(in) = ADP + phosphate + 5 H(+)(out). Its function is as follows. Produces ATP from ADP in the presence of a proton gradient across the membrane. The alpha chain is a regulatory subunit. The protein is ATP synthase subunit alpha of Rhodopseudomonas palustris (strain ATCC BAA-98 / CGA009).